We begin with the raw amino-acid sequence, 240 residues long: UDP-2,3-diacylglucosamine hydrolase (240 aa).

Mn(2+) contacts are provided by aspartate 8, histidine 10, aspartate 41, asparagine 79, and histidine 114. 79–80 (NR) provides a ligand contact to substrate. The substrate site is built by aspartate 122, serine 160, asparagine 164, lysine 167, and histidine 195. Mn(2+)-binding residues include histidine 195 and histidine 197.

It belongs to the LpxH family. It depends on Mn(2+) as a cofactor.

Its subcellular location is the cell inner membrane. It catalyses the reaction UDP-2-N,3-O-bis[(3R)-3-hydroxytetradecanoyl]-alpha-D-glucosamine + H2O = 2-N,3-O-bis[(3R)-3-hydroxytetradecanoyl]-alpha-D-glucosaminyl 1-phosphate + UMP + 2 H(+). Its pathway is glycolipid biosynthesis; lipid IV(A) biosynthesis; lipid IV(A) from (3R)-3-hydroxytetradecanoyl-[acyl-carrier-protein] and UDP-N-acetyl-alpha-D-glucosamine: step 4/6. Hydrolyzes the pyrophosphate bond of UDP-2,3-diacylglucosamine to yield 2,3-diacylglucosamine 1-phosphate (lipid X) and UMP by catalyzing the attack of water at the alpha-P atom. Involved in the biosynthesis of lipid A, a phosphorylated glycolipid that anchors the lipopolysaccharide to the outer membrane of the cell. This Salmonella paratyphi A (strain ATCC 9150 / SARB42) protein is UDP-2,3-diacylglucosamine hydrolase.